A 152-amino-acid polypeptide reads, in one-letter code: Probable flagellum biosynthesis repressor protein FlbT (152 aa).

This sequence belongs to the FlbT family.

Its function is as follows. Has a post-transcriptional repressor function in flagellum biogenesis. Associates with the 5'-UTR of fljK mRNA and promotes its degradation. This Brucella abortus (strain S19) protein is Probable flagellum biosynthesis repressor protein FlbT.